A 428-amino-acid chain; its full sequence is Cytokine-dependent hematopoietic cell linker (428 aa).

Residues 1 to 22 (MNRQGNRKTTKEGSNDLKFQNF) form a disordered region. Phosphotyrosine; by LYN occurs at positions 69 and 96. Disordered stretches follow at residues 135 to 198 (DKPI…EVQR) and 244 to 271 (SSSFTTSNHSVQNRDHRGGMQPCSPQRC). The interval 159-164 (PLPPPR) is mediates interaction with PLCG1; essential for BCR signaling; involved in restoration of BCR-induced calcium response and ERK2 and JNK2 activation in BLNK-deficient cells expressing LAT. Residues 178–180 (PEP) are mediates interaction with LAT, GRB2, and FGR; involved in translocation to the glycolipid-enriched microdomain and restoration of BCR-induced calcium response in BLNK-deficient DT40 cells expressing LAT. Positions 244–253 (SSSFTTSNHS) are enriched in low complexity. The 111-residue stretch at 309-419 (WYIGEYSRQA…RKQCHLTQPL (111 aa)) folds into the SH2 domain.

In terms of assembly, when phosphorylated, interacts with PLCG1, PLCG2, GRB2, VAV and LAT. Interacts with LBR and AGO2. Interacts with FGR. Part of a complex consisting of CLNK, SKAP1 and FYB1. Interacts (via SH2 domain) with FYB1; this interaction allows SKAP1 and FYB1 to promote tyrosine phosphorylation of CLNK by LYN. Interacts (via SH2 domain) with MAP4K1. In terms of processing, tyrosine-phosphorylated upon BCR cross-linking. Tyrosine phosphorylation at both Tyr-69 and Tyr-96 are required for BCR-induced calcium response and are essential to restore PLCG2-mediated signaling in BLNK-deficient DT40 cells, but this phosphorylation is dispensable in cells expressing LAT. Interacts with the SH2 domain of PLCG1 via phosphorylated Tyr-96. Tyrosine phosphorylation is increased when complexed with SKAP1 and FYB1.

Its subcellular location is the cytoplasm. In terms of biological role, an adapter protein which plays a role in the regulation of immunoreceptor signaling, including PLC-gamma-mediated B-cell antigen receptor (BCR) signaling and FC-epsilon R1-mediated mast cell degranulation. Together with FGR, it acts as a negative regulator of natural killer cell-activating receptors and inhibits interferon-gamma production. Acts as a positive regulator of both T-cell receptor and natural killer T (NKT) cell receptor signaling in CD4-positive NKT cells. Together with MAP4K1, it enhances CD3-triggered activation of T-cells and subsequent IL2 production. May be involved in tumor necrosis factor induced cell death by promoting reactive oxidative species generation, and MLKL oligomerization, ultimately leading to necrosis. Involved in phosphorylation of LAT. May be involved in high affinity immunoglobulin epsilon receptor signaling in mast cells. This chain is Cytokine-dependent hematopoietic cell linker (CLNK), found in Homo sapiens (Human).